Consider the following 166-residue polypeptide: Flagellar assembly factor FliW (166 aa).

The protein belongs to the FliW family. As to quaternary structure, interacts with translational regulator CsrA and flagellin(s).

It is found in the cytoplasm. Functionally, acts as an anti-CsrA protein, binds CsrA and prevents it from repressing translation of its target genes, one of which is flagellin. Binds to flagellin and participates in the assembly of the flagellum. The sequence is that of Flagellar assembly factor FliW from Desulfovibrio desulfuricans (strain ATCC 27774 / DSM 6949 / MB).